The sequence spans 1578 residues: FERM and PDZ domain-containing protein 1 (1578 aa).

The region spanning 57–135 (TVKIDKDTLL…SLSITVVRCT (79 aa)) is the PDZ domain. The FERM domain occupies 181-496 (NVLKLYLENG…GYYRLLVDPV (316 aa)). Disordered regions lie at residues 555–616 (KEEQ…EEDD), 720–743 (SDSSESTASRQGGAPPAWGQQGWT), and 759–831 (PLAF…VKKY). The span at 720–729 (SDSSESTASR) shows a compositional bias: polar residues. The span at 730 to 742 (QGGAPPAWGQQGW) shows a compositional bias: low complexity. Over residues 793-811 (AEPSATSLQNKASTSSPEN) the composition is skewed to polar residues. Residues 822-831 (PSRRGGVKKY) are compositionally biased toward basic residues. The tract at residues 924–931 (EPETMETK) is important for interaction with GPSM2. Disordered stretches follow at residues 950-1030 (PNNK…LASN), 1070-1194 (KYTE…QGCQ), and 1347-1374 (PQPETEEEDRDLEAHPMAPLTSPPSAGS). Residues 968 to 986 (TPHCSNPGSSGPDTAQARP) are compositionally biased toward polar residues. Residues 1100 to 1117 (TKEEPQGQLSLERDREVT) are compositionally biased toward basic and acidic residues. The span at 1139-1150 (DVSNNVSQTLDI) shows a compositional bias: polar residues.

Interacts with GPSM1. Interacts with GPSM2 (via TPR repeat region).

The protein resides in the cytoplasm. Its subcellular location is the cytosol. The protein localises to the cell membrane. Its function is as follows. Stabilizes membrane-bound GPSM1, and thereby promotes its interaction with GNAI1. This is FERM and PDZ domain-containing protein 1 (FRMPD1) from Homo sapiens (Human).